A 497-amino-acid polypeptide reads, in one-letter code: MTALFPFDNSYARLPSHFFGRVAPTAVEAPRLIRLNRALAVDLGLDPDRLESPEGVEVLAGQRVPEGAEPLAAAYAGHQFGQFVPQLGDGRAILLGEVVGRDGRRDIQLKGSGPTPFSRRGDGRAALGPVLREYLVSEAMHALGIPTTRALAAVTTGEQVIRETALPGAVLTRVASSHIRVGSFQFFAARGDVEGLRALADHAIARHDPEAARADNPYRALLDGVIRRQAALVARWLTVGFIHGVMNTDNMSIAGETIDYGPCAFLDTYDPATAFSSIDRHGRYAYGNQPRIALWNLTRLAEALLPLLSEDETQAVGEAEAALTGFAGQFEAAYHGGLNRKLGLATTRDGDPALAGDLLKTMAENEADFTLTFRRLGEAVPGPDGEPDPAAVEAVRSLFIDPTAYDRWAEGWRRRLKDEAGDAAARRQMMRAANPAFILRNHRVEEMITAAVERQDFAPFETLLTVLARPYEDQPDFARYAEPPEGGGRGYRTFCGT.

Residues G88, G90, R91, K110, D122, G123, R173, and R180 each coordinate ATP. D249 functions as the Proton acceptor in the catalytic mechanism. 2 residues coordinate Mg(2+): N250 and D259. D259 provides a ligand contact to ATP. The tract at residues 477-497 (FARYAEPPEGGGRGYRTFCGT) is disordered.

Belongs to the SELO family. The cofactor is Mg(2+). Requires Mn(2+) as cofactor.

It carries out the reaction L-seryl-[protein] + ATP = 3-O-(5'-adenylyl)-L-seryl-[protein] + diphosphate. The catalysed reaction is L-threonyl-[protein] + ATP = 3-O-(5'-adenylyl)-L-threonyl-[protein] + diphosphate. It catalyses the reaction L-tyrosyl-[protein] + ATP = O-(5'-adenylyl)-L-tyrosyl-[protein] + diphosphate. The enzyme catalyses L-histidyl-[protein] + UTP = N(tele)-(5'-uridylyl)-L-histidyl-[protein] + diphosphate. It carries out the reaction L-seryl-[protein] + UTP = O-(5'-uridylyl)-L-seryl-[protein] + diphosphate. The catalysed reaction is L-tyrosyl-[protein] + UTP = O-(5'-uridylyl)-L-tyrosyl-[protein] + diphosphate. Functionally, nucleotidyltransferase involved in the post-translational modification of proteins. It can catalyze the addition of adenosine monophosphate (AMP) or uridine monophosphate (UMP) to a protein, resulting in modifications known as AMPylation and UMPylation. The chain is Protein nucleotidyltransferase YdiU from Methylorubrum extorquens (strain PA1) (Methylobacterium extorquens).